A 1058-amino-acid chain; its full sequence is Vacuolar protein sorting-associated protein 54 (1058 aa).

The stretch at 369–389 forms a coiled coil; it reads SKKIVEVHERYEQKKKLLAKL.

This sequence belongs to the VPS54 family. Component of the Golgi-associated retrograde protein (GARP) complex, also called VFT (VPS fifty-three) complex, composed of vps-51, vps-52, vps-53 and vps-54. Within the complex interacts with vps-52 and vps-53.

It is found in the golgi apparatus. It localises to the trans-Golgi network. In terms of biological role, acts as a component of the GARP complex that is involved in retrograde transport from early and late endosomes to the trans-Golgi network (TGN). The GARP complex facilitates tethering as well as SNARE complex assembly at the Golgi. This is Vacuolar protein sorting-associated protein 54 from Caenorhabditis elegans.